A 245-amino-acid chain; its full sequence is Probable transcriptional regulatory protein APH_0480 (245 aa).

This sequence belongs to the TACO1 family.

Its subcellular location is the cytoplasm. The chain is Probable transcriptional regulatory protein APH_0480 from Anaplasma phagocytophilum (strain HZ).